We begin with the raw amino-acid sequence, 471 residues long: MKIKTRFAPSPTGYLHVGGARTALYSWLFSRHLGGEFVLRIEDTDLGRSTQEAIDAIMDGMNWLNLDWDEGPYFQTKRFDRYNAVIDQMLDAGTAYRCYCSKERLEALREAQMANGEKPRYDGHCRDSQCTHGADEPSVVRFRNPQEGSVIFDDKIRGPIEFSNQELDDLIIRRTDGSPTYNFCVVIDDWDMEITHVIRGEDHINNTPRQINILKALGAPVPEYAHVSMILGDDGKKLSKRHGAVGVMQYRDDGYLPEALLNYLVRLGWSHGDQEIFSIEEMTQLFTLDAVSKSASAFNTEKLQWLNHHYINSLPPEQVAVHLSWHVEQLGIDTRNGPELVEIVKLLGERCKTLKEMAESCRYFYEEFDAFDVDAAKKHLRPIARQPLEAVKVKLAAITEWTTENVHNAIQGTADELGVGMGKVGMPLRVAVTGVGQSPGMDVTVHAIGQARTLARIDKALAFISEREAQQ.

The 'HIGH' region signature appears at 9-19 (PSPTGYLHVGG). 4 residues coordinate Zn(2+): Cys-98, Cys-100, Cys-125, and Asp-127. The short motif at 237 to 241 (KLSKR) is the 'KMSKS' region element. Residue Lys-240 coordinates ATP.

Belongs to the class-I aminoacyl-tRNA synthetase family. Glutamate--tRNA ligase type 1 subfamily. As to quaternary structure, monomer. Requires Zn(2+) as cofactor.

Its subcellular location is the cytoplasm. The catalysed reaction is tRNA(Glu) + L-glutamate + ATP = L-glutamyl-tRNA(Glu) + AMP + diphosphate. Its function is as follows. Catalyzes the attachment of glutamate to tRNA(Glu) in a two-step reaction: glutamate is first activated by ATP to form Glu-AMP and then transferred to the acceptor end of tRNA(Glu). In Yersinia pestis, this protein is Glutamate--tRNA ligase.